Reading from the N-terminus, the 295-residue chain is ESX-3 secretion-associated protein EspG3 (295 aa).

The protein belongs to the EspG family. As to quaternary structure, interacts specifically with ESX-3-dependent PE/PPE proteins.

It localises to the cytoplasm. In terms of biological role, specific chaperone for cognate PE/PPE proteins. Plays an important role in preventing aggregation of PE/PPE dimers. In Mycobacterium tuberculosis (strain CDC 1551 / Oshkosh), this protein is ESX-3 secretion-associated protein EspG3.